The primary structure comprises 935 residues: LPS-assembly protein LptD (935 aa).

A signal peptide spans 1–33 (MALKSPAFRRKFPLLVTGGLLALQPLATSYVVA). The interval 52-85 (KTPVNNLPPRPVHEGAAVSSGTEAAGEAETADRP) is disordered. Over residues 65–79 (EGAAVSSGTEAAGEA) the composition is skewed to low complexity.

This sequence belongs to the LptD family. Component of the lipopolysaccharide transport and assembly complex. Interacts with LptE and LptA.

It is found in the cell outer membrane. In terms of biological role, together with LptE, is involved in the assembly of lipopolysaccharide (LPS) at the surface of the outer membrane. The sequence is that of LPS-assembly protein LptD from Pseudomonas putida (strain ATCC 700007 / DSM 6899 / JCM 31910 / BCRC 17059 / LMG 24140 / F1).